Consider the following 296-residue polypeptide: Antisense-enhancing sequence 1 (296 aa).

E47 is a catalytic residue.

This sequence belongs to the PhzF family.

May have isomerase activity. Enhances target gene silencing when coexpressed with antisense RNA. This is Antisense-enhancing sequence 1 (aes1) from Schizosaccharomyces pombe (strain 972 / ATCC 24843) (Fission yeast).